The chain runs to 378 residues: Histidine decarboxylase (378 aa).

A substrate-binding site is contributed by His120. An N6-(pyridoxal phosphate)lysine modification is found at Lys233.

Belongs to the group II decarboxylase family. As to quaternary structure, homotetramer. Pyridoxal 5'-phosphate is required as a cofactor.

It carries out the reaction L-histidine + H(+) = histamine + CO2. The polypeptide is Histidine decarboxylase (hdc) (Klebsiella aerogenes (Enterobacter aerogenes)).